A 773-amino-acid chain; its full sequence is Carnitine O-palmitoyltransferase 1, liver isoform (773 aa).

Alanine 2 is subject to N-acetylalanine. Over 2–47 (AEAHQAVAFQFTVTPDGIDLRLSHEALKQICLSGLHSWKKKFIRFK) the chain is Cytoplasmic. A helical membrane pass occupies residues 48 to 73 (NGIITGVFPANPSSWLIVVVGVISSM). The Mitochondrial intermembrane portion of the chain corresponds to 74–102 (HAKVDPSLGMIAKISRTLDTTGRMSSQTK). Residues 103–122 (NIVSGVLFGTGLWVAVIMTM) form a helical membrane-spanning segment. The Cytoplasmic portion of the chain corresponds to 123-773 (RYSLKVLLSY…LFGLTINSKK (651 aa)). A 3'-nitrotyrosine modification is found at tyrosine 282. The active-site Proton acceptor is the histidine 473. 555–567 (GKGLIKKCRTSPD) serves as a coordination point for CoA. Threonine 588 carries the phosphothreonine modification. A 3'-nitrotyrosine modification is found at tyrosine 589. (R)-carnitine contacts are provided by tyrosine 589 and threonine 602. Residue threonine 604 is modified to Phosphothreonine. 2 positions are modified to phosphoserine: serine 741 and serine 747.

It belongs to the carnitine/choline acetyltransferase family. As to quaternary structure, homohexamer and homotrimer. Identified in a complex that contains at least CPT1A, ACSL1 and VDAC1. Also identified in complexes with ACSL1 and VDAC2 and VDAC3. Interacts with ZDHHC4. As to expression, liver and kidney.

It is found in the mitochondrion outer membrane. The enzyme catalyses (R)-carnitine + hexadecanoyl-CoA = O-hexadecanoyl-(R)-carnitine + CoA. It carries out the reaction succinyl-CoA + L-lysyl-[protein] = N(6)-succinyl-L-lysyl-[protein] + CoA + H(+). Its pathway is lipid metabolism; fatty acid beta-oxidation. Inhibited by malonyl-CoA. Its function is as follows. Catalyzes the transfer of the acyl group of long-chain fatty acid-CoA conjugates onto carnitine, an essential step for the mitochondrial uptake of long-chain fatty acids and their subsequent beta-oxidation in the mitochondrion. Also possesses a lysine succinyltransferase activity that can regulate enzymatic activity of substrate proteins such as ENO1 and metabolism independent of its classical carnitine O-palmitoyltransferase activity. Plays an important role in hepatic triglyceride metabolism. Also plays a role in inducible regulatory T-cell (iTreg) differentiation once activated by butyryl-CoA that antagonizes malonyl-CoA-mediated CPT1A repression. Sustains the IFN-I response by recruiting ZDHCC4 to palmitoylate MAVS at the mitochondria leading to MAVS stabilization and activation. The chain is Carnitine O-palmitoyltransferase 1, liver isoform (Cpt1a) from Rattus norvegicus (Rat).